The following is an 87-amino-acid chain: Small ribosomal subunit protein uS15c (87 aa).

It belongs to the universal ribosomal protein uS15 family. In terms of assembly, part of the 30S ribosomal subunit.

It is found in the plastid. The protein localises to the chloroplast. This Atropa belladonna (Belladonna) protein is Small ribosomal subunit protein uS15c (rps15).